We begin with the raw amino-acid sequence, 222 residues long: MAKLILATFAVVFLALAATSLAGDPDMLQDVCVADYKSLRGPLRLNGIPCKRLENVTANDFFFDGLTNAGNTTNAVGSLVTAASVERLPGLNTMGVSMARIDYAPWGLSPPHTHPRATEIMFVAEGTLDVGFVTTANKLFTRTVSKGEVFVFPRGLVHFQRNSGNTSALAIAAFNSQLPGTQSIADTLFGAAPPLPSDTLARAFQVDGGMVESIKSKFPPKY.

The first 22 residues, 1-22, serve as a signal peptide directing secretion; that stretch reads MAKLILATFAVVFLALAATSLA. A disulfide bond links C32 and C50. N-linked (GlcNAc...) asparagine glycosylation is found at N55 and N71. The 149-residue stretch at 64 to 212 folds into the Cupin type-1 domain; the sequence is DGLTNAGNTT…AFQVDGGMVE (149 aa). The Mn(2+) site is built by H112, H114, E119, and H158. N-linked (GlcNAc...) asparagine glycosylation is present at N165.

It belongs to the germin family. As to quaternary structure, oligomer (believed to be a pentamer but probably hexamer).

The protein resides in the secreted. It is found in the extracellular space. The protein localises to the apoplast. In terms of biological role, may play a role in plant defense. Probably has no oxalate oxidase activity even if the active site is conserved. The sequence is that of Putative germin-like protein 3-2 from Oryza sativa subsp. japonica (Rice).